Consider the following 150-residue polypeptide: 6,7-dimethyl-8-ribityllumazine synthase (150 aa).

5-amino-6-(D-ribitylamino)uracil contacts are provided by residues phenylalanine 11, valine 43–aspartate 45, and alanine 67–isoleucine 69. Alanine 72 to threonine 73 contributes to the (2S)-2-hydroxy-3-oxobutyl phosphate binding site. Histidine 75 functions as the Proton donor in the catalytic mechanism. Leucine 100 contributes to the 5-amino-6-(D-ribitylamino)uracil binding site. Arginine 115 provides a ligand contact to (2S)-2-hydroxy-3-oxobutyl phosphate.

It belongs to the DMRL synthase family.

It catalyses the reaction (2S)-2-hydroxy-3-oxobutyl phosphate + 5-amino-6-(D-ribitylamino)uracil = 6,7-dimethyl-8-(1-D-ribityl)lumazine + phosphate + 2 H2O + H(+). It functions in the pathway cofactor biosynthesis; riboflavin biosynthesis; riboflavin from 2-hydroxy-3-oxobutyl phosphate and 5-amino-6-(D-ribitylamino)uracil: step 1/2. Catalyzes the formation of 6,7-dimethyl-8-ribityllumazine by condensation of 5-amino-6-(D-ribitylamino)uracil with 3,4-dihydroxy-2-butanone 4-phosphate. This is the penultimate step in the biosynthesis of riboflavin. This chain is 6,7-dimethyl-8-ribityllumazine synthase, found in Pyrobaculum aerophilum (strain ATCC 51768 / DSM 7523 / JCM 9630 / CIP 104966 / NBRC 100827 / IM2).